The chain runs to 545 residues: Methionine--tRNA ligase (545 aa).

Residues 12–22 (PYANGSLHIGH) carry the 'HIGH' region motif. 4 residues coordinate Zn(2+): Cys-143, Cys-146, Cys-156, and Cys-159. The short motif at 329–333 (KLSKS) is the 'KMSKS' region element. Lys-332 provides a ligand contact to ATP.

Belongs to the class-I aminoacyl-tRNA synthetase family. MetG type 1 subfamily. As to quaternary structure, monomer. Zn(2+) serves as cofactor.

The protein resides in the cytoplasm. The enzyme catalyses tRNA(Met) + L-methionine + ATP = L-methionyl-tRNA(Met) + AMP + diphosphate. Functionally, is required not only for elongation of protein synthesis but also for the initiation of all mRNA translation through initiator tRNA(fMet) aminoacylation. This chain is Methionine--tRNA ligase (metG), found in Buchnera aphidicola subsp. Baizongia pistaciae (strain Bp).